Consider the following 142-residue polypeptide: Large ribosomal subunit protein uL13 (142 aa).

The protein belongs to the universal ribosomal protein uL13 family. Part of the 50S ribosomal subunit.

Its function is as follows. This protein is one of the early assembly proteins of the 50S ribosomal subunit, although it is not seen to bind rRNA by itself. It is important during the early stages of 50S assembly. This is Large ribosomal subunit protein uL13 from Bordetella petrii (strain ATCC BAA-461 / DSM 12804 / CCUG 43448).